A 374-amino-acid chain; its full sequence is Alginate lyase (374 aa).

The first 26 residues, 1-26, serve as a signal peptide directing secretion; the sequence is MRNPKLKNLLAPTLLSLAMFAGATQA. Residues 67-68, 140-141, and Y258 each bind substrate; these read SK and HT.

This sequence belongs to the polysaccharide lyase 5 family.

Its subcellular location is the periplasm. The catalysed reaction is Eliminative cleavage of alginate to give oligosaccharides with 4-deoxy-alpha-L-erythro-hex-4-enuronosyl groups at their non-reducing ends and beta-D-mannuronate at their reducing end.. Its function is as follows. Catalyzes the depolymerization of alginate by cleaving the beta-1,4 glycosidic bond between two adjacent sugar residues via a beta-elimination mechanism. May serve to degrade mislocalized alginate that is trapped in the periplasmic space. The sequence is that of Alginate lyase from Cobetia marina (Deleya marina).